We begin with the raw amino-acid sequence, 121 residues long: UPF0102 protein BF0706 (121 aa).

Belongs to the UPF0102 family.

In Bacteroides fragilis (strain YCH46), this protein is UPF0102 protein BF0706.